A 648-amino-acid polypeptide reads, in one-letter code: SRSF protein kinase 1 (648 aa).

Residues 1–57 (MERKVLALQARKKRTKAKKDKAQRKPETQHRGSAPHSESDIPEQEEEILGSDDDEQE) form a disordered region. Positions 10–22 (ARKKRTKAKKDKA) are enriched in basic residues. Residues 40 to 57 (DIPEQEEEILGSDDDEQE) show a composition bias toward acidic residues. Ser-51 is subject to Phosphoserine. Positions 80–646 (YHVIRKLGWG…AAECLRHPWL (567 aa)) constitute a Protein kinase domain. ATP contacts are provided by residues 86 to 94 (LGWGHFSTV) and Lys-109. Asp-213 serves as the catalytic Proton acceptor. Disordered stretches follow at residues 238 to 354 (WQRS…APEI) and 395 to 464 (PSFL…DSKG). Positions 265-276 (KNKKKKLKKKQK) are enriched in basic residues. 2 stretches are compositionally biased toward basic and acidic residues: residues 277-288 (RQAELLEKRMQE) and 304-317 (NKQE…DRPL). 3 positions are modified to phosphoserine: Ser-309, Ser-311, and Ser-333. 2 stretches are compositionally biased toward polar residues: residues 333-343 (SNSIGQDQTLT) and 396-441 (SFLN…TQLE). Thr-448 carries the post-translational modification Phosphothreonine. Position 450 is a phosphoserine (Ser-450). Ser-548 is modified (phosphoserine; by CK2).

The protein belongs to the protein kinase superfamily. CMGC Ser/Thr protein kinase family. In terms of assembly, monomer. Found in a multisubunit complex containing seven proteins, named toposome, which separates entangled circular chromatin DNA during chromosome segregation. Interacts with HHV-1 ICP27 protein. Interacts with DNAJC8 and AHSA1/AHA1 and this mediates formation of a complex with the Hsp70 /Hsp90 machinery. Binds to IGF2BP1, SYNCRIP, HNRNPA2B1 and HNRNPC. Interacts with SAFB/SAFB1 and SAFB2 which inhibits its activity. Mg(2+) is required as a cofactor. Predominantly expressed in the testis but is also present at lower levels in heart, spleen, liver, brain, kidney, lung and skeletal muscle. Present in all germinal cells in the seminiferous tubules but not in mature spermatozoa.

The protein resides in the cytoplasm. It localises to the nucleus. It is found in the nucleoplasm. Its subcellular location is the nucleus matrix. The protein localises to the microsome. The protein resides in the nucleus speckle. It localises to the chromosome. The catalysed reaction is L-seryl-[protein] + ATP = O-phospho-L-seryl-[protein] + ADP + H(+). The enzyme catalyses L-threonyl-[protein] + ATP = O-phospho-L-threonyl-[protein] + ADP + H(+). Activated by phosphorylation on Ser-51 and Ser-548. Its function is as follows. Serine/arginine-rich protein-specific kinase which specifically phosphorylates its substrates at serine residues located in regions rich in arginine/serine dipeptides, known as RS domains and is involved in the phosphorylation of SR splicing factors and the regulation of splicing. Plays a central role in the regulatory network for splicing, controlling the intranuclear distribution of splicing factors in interphase cells and the reorganization of nuclear speckles during mitosis. Can influence additional steps of mRNA maturation, as well as other cellular activities, such as chromatin reorganization in somatic and sperm cells and cell cycle progression. Phosphorylates SFRS2, ZRSR2, LBR and PRM1. Phosphorylates SRSF1 using a directional (C-terminal to N-terminal) and a dual-track mechanism incorporating both processive phosphorylation (in which the kinase stays attached to the substrate after each round of phosphorylation) and distributive phosphorylation steps (in which the kinase and substrate dissociate after each phosphorylation event). The RS domain of SRSF1 binds first to a docking groove in the large lobe of the kinase domain of SRPK1. This induces certain structural changes in SRPK1 and/or RRM2 domain of SRSF1, allowing RRM2 to bind the kinase and initiate phosphorylation. The cycles continue for several phosphorylation steps in a processive manner (steps 1-8) until the last few phosphorylation steps (approximately steps 9-12). During that time, a mechanical stress induces the unfolding of the beta-4 motif in RRM2, which then docks at the docking groove of SRPK1. This also signals RRM2 to begin to dissociate, which facilitates SRSF1 dissociation after phosphorylation is completed. Can mediate hepatitis B virus (HBV) core protein phosphorylation. It plays a negative role in the regulation of HBV replication through a mechanism not involving the phosphorylation of the core protein but by reducing the packaging efficiency of the pregenomic RNA (pgRNA) without affecting the formation of the viral core particles. Can induce splicing of exon 10 in MAPT/TAU. In Mus musculus (Mouse), this protein is SRSF protein kinase 1.